Consider the following 491-residue polypeptide: Sucrose transport protein SUC9 (491 aa).

A compositionally biased stretch (basic and acidic residues) spans 1-12; it reads MSDIQAKEDAAP. A disordered region spans residues 1 to 26; it reads MSDIQAKEDAAPVDRQSSSSVVVPDE. Topologically, residues 1–33 are cytoplasmic; the sequence is MSDIQAKEDAAPVDRQSSSSVVVPDEPSPLRKM. Serine 17 is modified (phosphoserine). A helical membrane pass occupies residues 34–54; that stretch reads ISVASIAAGIQFGWALQLSLL. The Extracellular portion of the chain corresponds to 55-68; that stretch reads TPYVQLLGVPHKWS. A helical transmembrane segment spans residues 69-89; it reads SFIWLCGPISGLLVQPTVGYF. Topologically, residues 90–101 are cytoplasmic; that stretch reads SDRCKSRFGRRR. A helical membrane pass occupies residues 102–122; sequence PFIATGALLVALAVILIGFAA. The Extracellular portion of the chain corresponds to 123–139; the sequence is DFGHTMGDKLDEAVKIR. Residues 140 to 160 form a helical membrane-spanning segment; it reads AVGFFVVGFWILDVANNTLQG. Over 161–181 the chain is Cytoplasmic; that stretch reads PCRAFLGDLAAGDAKKTRTAN. A helical membrane pass occupies residues 182 to 202; the sequence is AIFSFFMAVGNVLGYAAGSYT. Residues 203-224 lie on the Extracellular side of the membrane; it reads NLHKIFPFTVTKACDIYCANLK. The chain crosses the membrane as a helical span at residues 225 to 245; that stretch reads SCFIISITLLIVLTIIALWYV. Over 246-277 the chain is Cytoplasmic; that stretch reads EDKQWSPNADSDNEKTPFFGEIFGAFKVMKRP. Residues 278–298 traverse the membrane as a helical segment; that stretch reads MWMLLAVTALNWIAWFPFLLY. Residues 299 to 329 are Extracellular-facing; sequence DTDWMGREVYGGDSAGDDKMKKLYNHGIQVG. A helical transmembrane segment spans residues 330 to 350; sequence SLGLMLNSIVLGVMSLVIGVI. Residues 351 to 358 lie on the Cytoplasmic side of the membrane; that stretch reads SKKIGAKR. A helical transmembrane segment spans residues 359–379; sequence LWGAVNIILAVCLAMTVLVTK. Over 380–406 the chain is Extracellular; that stretch reads KAEEHRKIAGRMALPTNAIRDGALSLF. Residues 407–427 form a helical membrane-spanning segment; sequence AILGIPLAITFSIPFALASII. The Cytoplasmic portion of the chain corresponds to 428 to 443; it reads SSSSGAGQGLSLGVLN. A helical transmembrane segment spans residues 444-464; that stretch reads MAIVIPQMIVSFGVGPIDALF. The Extracellular segment spans residues 465–468; that stretch reads GGGN. Residues 469-489 form a helical membrane-spanning segment; the sequence is LPGFVVGAIAALISSVVALTV. The Cytoplasmic portion of the chain corresponds to 490-491; it reads LP.

The protein belongs to the glycoside-pentoside-hexuronide (GPH) cation symporter transporter (TC 2.A.2.4) family. Widely expressed.

Its subcellular location is the cell membrane. The catalysed reaction is sucrose(out) + H(+)(out) = sucrose(in) + H(+)(in). The protein operates within glycan biosynthesis; sucrose metabolism. With respect to regulation, inhibited by protonophores (e.g. carbonyl cyanide m-chlorophenyl-hydrazone (CCCP)) and SH group inhibitors (e.g. p-chloromercuribenzene sulphonic acid (PCMBS)). In terms of biological role, high-affinity sucrose transporter. Responsible for the transport of sucrose into the cell, with the concomitant uptake of protons (symport system). Can also transport a wide range of glucosides, such as helicin, salicin, arbutin, maltose, fraxin, esculin, uranose, alpha-methylglucoside, alpha-phenylglucoside and beta-phenylglucoside. Plays a role in flowering time transition delay. This is Sucrose transport protein SUC9 from Arabidopsis thaliana (Mouse-ear cress).